Here is a 218-residue protein sequence, read N- to C-terminus: YlmG homolog protein 1-2, chloroplastic (218 aa).

Residues 1 to 83 (MASFTTNSLA…TRSITTLVLL (83 aa)) constitute a chloroplast transit peptide. The next 2 membrane-spanning stretches (helical) occupy residues 133–153 (LTVV…VLMV) and 187–207 (IIPP…AVLG).

This sequence belongs to the YggT family.

It is found in the plastid. It localises to the chloroplast thylakoid membrane. Its function is as follows. Not required for the biogenesis and accumulation of native cytochrome b6 in the thylakoid membrane. Not functionally involved in the pathway for covalent binding of the c-type heme to cytochrome b6. In Arabidopsis thaliana (Mouse-ear cress), this protein is YlmG homolog protein 1-2, chloroplastic.